The following is a 62-amino-acid chain: Large ribosomal subunit protein uL30 (62 aa).

It belongs to the universal ribosomal protein uL30 family. As to quaternary structure, part of the 50S ribosomal subunit.

In Herpetosiphon aurantiacus (strain ATCC 23779 / DSM 785 / 114-95), this protein is Large ribosomal subunit protein uL30.